Reading from the N-terminus, the 621-residue chain is 1-deoxy-D-xylulose-5-phosphate synthase (621 aa).

Residues H80 and 121–123 (GHS) contribute to the thiamine diphosphate site. D152 is a Mg(2+) binding site. Thiamine diphosphate-binding positions include 153 to 154 (GA), N181, Y288, and E370. N181 is a binding site for Mg(2+).

The protein belongs to the transketolase family. DXPS subfamily. As to quaternary structure, homodimer. Requires Mg(2+) as cofactor. Thiamine diphosphate serves as cofactor.

It catalyses the reaction D-glyceraldehyde 3-phosphate + pyruvate + H(+) = 1-deoxy-D-xylulose 5-phosphate + CO2. The protein operates within metabolic intermediate biosynthesis; 1-deoxy-D-xylulose 5-phosphate biosynthesis; 1-deoxy-D-xylulose 5-phosphate from D-glyceraldehyde 3-phosphate and pyruvate: step 1/1. In terms of biological role, catalyzes the acyloin condensation reaction between C atoms 2 and 3 of pyruvate and glyceraldehyde 3-phosphate to yield 1-deoxy-D-xylulose-5-phosphate (DXP). This is 1-deoxy-D-xylulose-5-phosphate synthase from Shewanella frigidimarina (strain NCIMB 400).